A 453-amino-acid polypeptide reads, in one-letter code: Bifunctional protein GlmU (453 aa).

Residues 1 to 225 are pyrophosphorylase; it reads MNIVILAAGT…EWETLGVNSK (225 aa). UDP-N-acetyl-alpha-D-glucosamine contacts are provided by residues 6-9, lysine 20, glutamine 71, 76-77, 98-100, glycine 135, glutamate 150, asparagine 165, and asparagine 223; these read LAAG, GT, and YGD. A Mg(2+)-binding site is contributed by aspartate 100. Residue asparagine 223 participates in Mg(2+) binding. The interval 226 to 246 is linker; that stretch reads QQLAELERIHQHNVADALLVA. Residues 247–453 form an N-acetyltransferase region; sequence GVTLADPARL…GYVRPTKKKS (207 aa). The UDP-N-acetyl-alpha-D-glucosamine site is built by arginine 329 and lysine 347. Histidine 359 serves as the catalytic Proton acceptor. Residues tyrosine 362 and asparagine 373 each contribute to the UDP-N-acetyl-alpha-D-glucosamine site. Residues alanine 376, 382-383, serine 401, and alanine 419 contribute to the acetyl-CoA site; that span reads NY.

In the N-terminal section; belongs to the N-acetylglucosamine-1-phosphate uridyltransferase family. It in the C-terminal section; belongs to the transferase hexapeptide repeat family. As to quaternary structure, homotrimer. Mg(2+) serves as cofactor.

The protein resides in the cytoplasm. It carries out the reaction alpha-D-glucosamine 1-phosphate + acetyl-CoA = N-acetyl-alpha-D-glucosamine 1-phosphate + CoA + H(+). The catalysed reaction is N-acetyl-alpha-D-glucosamine 1-phosphate + UTP + H(+) = UDP-N-acetyl-alpha-D-glucosamine + diphosphate. The protein operates within nucleotide-sugar biosynthesis; UDP-N-acetyl-alpha-D-glucosamine biosynthesis; N-acetyl-alpha-D-glucosamine 1-phosphate from alpha-D-glucosamine 6-phosphate (route II): step 2/2. It functions in the pathway nucleotide-sugar biosynthesis; UDP-N-acetyl-alpha-D-glucosamine biosynthesis; UDP-N-acetyl-alpha-D-glucosamine from N-acetyl-alpha-D-glucosamine 1-phosphate: step 1/1. Its pathway is bacterial outer membrane biogenesis; LPS lipid A biosynthesis. In terms of biological role, catalyzes the last two sequential reactions in the de novo biosynthetic pathway for UDP-N-acetylglucosamine (UDP-GlcNAc). The C-terminal domain catalyzes the transfer of acetyl group from acetyl coenzyme A to glucosamine-1-phosphate (GlcN-1-P) to produce N-acetylglucosamine-1-phosphate (GlcNAc-1-P), which is converted into UDP-GlcNAc by the transfer of uridine 5-monophosphate (from uridine 5-triphosphate), a reaction catalyzed by the N-terminal domain. The chain is Bifunctional protein GlmU from Paraburkholderia phytofirmans (strain DSM 17436 / LMG 22146 / PsJN) (Burkholderia phytofirmans).